Reading from the N-terminus, the 155-residue chain is Small ribosomal subunit protein uS7 (155 aa).

The protein belongs to the universal ribosomal protein uS7 family. In terms of assembly, part of the 30S ribosomal subunit. Contacts proteins S9 and S11.

In terms of biological role, one of the primary rRNA binding proteins, it binds directly to 16S rRNA where it nucleates assembly of the head domain of the 30S subunit. Is located at the subunit interface close to the decoding center, probably blocks exit of the E-site tRNA. This Thermosipho melanesiensis (strain DSM 12029 / CIP 104789 / BI429) protein is Small ribosomal subunit protein uS7.